Here is a 183-residue protein sequence, read N- to C-terminus: Glutathione-regulated potassium-efflux system ancillary protein KefG (183 aa).

Belongs to the NAD(P)H dehydrogenase (quinone) family. KefG subfamily. In terms of assembly, interacts with KefB.

Its subcellular location is the cell inner membrane. It carries out the reaction a quinone + NADH + H(+) = a quinol + NAD(+). The catalysed reaction is a quinone + NADPH + H(+) = a quinol + NADP(+). Functionally, regulatory subunit of a potassium efflux system that confers protection against electrophiles. Required for full activity of KefB. The chain is Glutathione-regulated potassium-efflux system ancillary protein KefG from Pectobacterium atrosepticum (strain SCRI 1043 / ATCC BAA-672) (Erwinia carotovora subsp. atroseptica).